The primary structure comprises 124 residues: Colorectal cancer-associated protein 1 (124 aa).

A helical transmembrane segment spans residues 77-97; sequence LYGCFCVGLVSGMAISVLLLA.

Expressed in gastrointestinal and immune tissue, as well as prostate, testis and ovary. Expressed in lamina propria and eosinophils but not in epithelial cells. Expression is greater in benign adjacent tissues than in colon tumors.

The protein resides in the membrane. The chain is Colorectal cancer-associated protein 1 (COLCA1) from Homo sapiens (Human).